Reading from the N-terminus, the 171-residue chain is uncharacterized protein (171 aa).

The helical transmembrane segment at 5 to 25 (FLLTIFALWVGGFGYYLYLIN) threads the bilayer.

It is found in the membrane. This is an uncharacterized protein from Rickettsia conorii (strain ATCC VR-613 / Malish 7).